The primary structure comprises 359 residues: MKTLHVELGERGYPIYIGRGLLGHPDLIQAHLPGGQVLVVTNEVVAPLYLDRMLASLAGKDTGSVVLPDGEAHKTLDSAMAVFDALLARRFGRNAAIVALGGGVIGDLAGFAAACYQRGVPFIQVPTTLLSQVDSSVGGKTAVNHPRGKNMIGAFYQPRCVLADTDTLDTLPDRELSAGLAEVIKYGFIRDPEFLAWLEANVERLLQRDPEALAYAIERSCINKAEIVAEDETETGVRATLNLGHTFGHAIETGMGYGVCLHGEAVAIGMCQAADLSRRLGWIGDDEVARVIRLLERARLPVVPPRELDADAFLEHMAVDKKNVDGGLRLVLLKSLGEATLPVAVDAGLLRATLECYGR.

NAD(+)-binding positions include 69-74 (DGEAHK), 103-107 (GVIGD), 127-128 (TT), K140, K149, and 167-170 (TLDT). Residues E182, H245, and H262 each coordinate Zn(2+).

The protein belongs to the sugar phosphate cyclases superfamily. Dehydroquinate synthase family. It depends on Co(2+) as a cofactor. Zn(2+) is required as a cofactor. NAD(+) serves as cofactor.

It is found in the cytoplasm. The enzyme catalyses 7-phospho-2-dehydro-3-deoxy-D-arabino-heptonate = 3-dehydroquinate + phosphate. Its pathway is metabolic intermediate biosynthesis; chorismate biosynthesis; chorismate from D-erythrose 4-phosphate and phosphoenolpyruvate: step 2/7. Its function is as follows. Catalyzes the conversion of 3-deoxy-D-arabino-heptulosonate 7-phosphate (DAHP) to dehydroquinate (DHQ). The sequence is that of 3-dehydroquinate synthase from Methylococcus capsulatus (strain ATCC 33009 / NCIMB 11132 / Bath).